The primary structure comprises 717 residues: Glycine--tRNA ligase beta subunit (717 aa).

Belongs to the class-II aminoacyl-tRNA synthetase family. As to quaternary structure, tetramer of two alpha and two beta subunits.

Its subcellular location is the cytoplasm. It catalyses the reaction tRNA(Gly) + glycine + ATP = glycyl-tRNA(Gly) + AMP + diphosphate. This is Glycine--tRNA ligase beta subunit from Gloeothece citriformis (strain PCC 7424) (Cyanothece sp. (strain PCC 7424)).